The primary structure comprises 136 residues: Histone H3.2 (136 aa).

The disordered stretch occupies residues 1–43 (MARTKQTARKSTGGKAPRKQLATKAARKSAPATGGVKKPHRFR). The residue at position 5 (Lys-5) is an N6-methylated lysine. The residue at position 10 (Lys-10) is an N6-acetyllysine; alternate. An N6-methylated lysine; alternate modification is found at Lys-10. Ser-11 is modified (phosphoserine). Residue Thr-12 is modified to Phosphothreonine. An N6-acetyllysine modification is found at Lys-15. 2 positions are modified to N6-acetyllysine; alternate: Lys-19 and Lys-24. Lys-19 and Lys-24 each carry N6-methylated lysine; alternate. N6-methylated lysine is present on Lys-28. Phosphoserine is present on Ser-29. An N6-methylated lysine modification is found at Lys-37.

The protein belongs to the histone H3 family. As to quaternary structure, the nucleosome is a histone octamer containing two molecules each of H2A, H2B, H3 and H4 assembled in one H3-H4 heterotetramer and two H2A-H2B heterodimers. The octamer wraps approximately 147 bp of DNA. In terms of processing, acetylation is generally linked to gene activation. Can be acetylated to form H3K9ac, H3K14ac, H3K18ac and H3K23ac. H3K9ac could compete with H3K9me and prevent gene silencing. H3K9ac is restricted to euchromatin. Methylated to form mainly H3K4me, H3K9me, H3K18me, H3K23me, H3K27me and H3K36me. H3K4me1/2/3, H3K9me3, H3K27me3 and H3K36me1/2/3 are typical marks for euchromatin, whereas heterochromatic chromocenters are enriched in H3K9me1/2 and H3K27me1/2. H2BK143ub1 is probably prerequisite for H3K4me. Post-translationally, can be phosphorylated to form H3S10ph, H3T11ph and H3S28ph.

The protein localises to the nucleus. The protein resides in the chromosome. Core component of nucleosome. Nucleosomes wrap and compact DNA into chromatin, limiting DNA accessibility to the cellular machineries which require DNA as a template. Histones thereby play a central role in transcription regulation, DNA repair, DNA replication and chromosomal stability. DNA accessibility is regulated via a complex set of post-translational modifications of histones, also called histone code, and nucleosome remodeling. This chain is Histone H3.2, found in Encephalartos altensteinii (Altenstein's bread tree).